Consider the following 333-residue polypeptide: MQSSVNEFLTPRHIDVQVVSPTRAKITLEPLERGFGHTLGNALRRILLSSMPGCAVVEAEIDGVLHEYSAIEGVQEDVIEILLNLKGLAIKLHGRDEVTLTLSKKGSGVVTAADIQLDHDVEIVNPDHVIANLASNGALNMKLVVARGRGYEPADSRQSDEDESRSIGRLQLDSSFSPVRRIAYVVENARVEQRTNLDKLVIDLETNGTLDPEEAIRRAATILQQQLAAFVDLKGDSEPVVVEQEDEIDPILLRPVDDLELTVRSANCLKAENIYYIGDLIQRTEVELLKTPNLGKKSLTEIKDVLASRGLSLGMRLDNWPPASLKKDDKATA.

The alpha N-terminal domain (alpha-NTD) stretch occupies residues Met-1–Lys-234. Residues Ile-248–Ala-333 are alpha C-terminal domain (alpha-CTD).

Belongs to the RNA polymerase alpha chain family. Homodimer. The RNAP catalytic core consists of 2 alpha, 1 beta, 1 beta' and 1 omega subunit. When a sigma factor is associated with the core the holoenzyme is formed, which can initiate transcription.

It carries out the reaction RNA(n) + a ribonucleoside 5'-triphosphate = RNA(n+1) + diphosphate. Its function is as follows. DNA-dependent RNA polymerase catalyzes the transcription of DNA into RNA using the four ribonucleoside triphosphates as substrates. This chain is DNA-directed RNA polymerase subunit alpha, found in Pseudomonas putida (Arthrobacter siderocapsulatus).